The primary structure comprises 61 residues: Large ribosomal subunit protein uL30 (61 aa).

The protein belongs to the universal ribosomal protein uL30 family. In terms of assembly, part of the 50S ribosomal subunit.

The polypeptide is Large ribosomal subunit protein uL30 (Bordetella avium (strain 197N)).